The chain runs to 299 residues: Tricarboxylate transport protein (299 aa).

Solcar repeat units lie at residues 10–97 (VDPL…IKDM), 109–199 (TRGV…IKTL), and 212–297 (LSSG…VLVM). A run of 6 helical transmembrane segments spans residues 16–36 (FLAGSLAGAAEACITYPFEFA), 66–86 (IGSIYVGCPAFIIGNTAKAGI), 113–133 (IAGLGAGLLESVAAVTPFEAI), 174–193 (GVLPVSMRQAANQAVRLGCY), 215–235 (GLTFLVGAFSGIVTVYSTMPL), and 272–291 (GATPRLGRLVLSGGIVFTIY).

The protein belongs to the mitochondrial carrier (TC 2.A.29) family.

Its subcellular location is the mitochondrion inner membrane. Transport of citrate across inner mitochondrial membrane. The sequence is that of Tricarboxylate transport protein (CTP1) from Saccharomyces cerevisiae (strain ATCC 204508 / S288c) (Baker's yeast).